Consider the following 149-residue polypeptide: Transthyretin (149 aa).

An N-terminal signal peptide occupies residues 1–20 (MAFHSLLLLCLAGLVFLSEA). C32 bears the Sulfocysteine mark. An L-thyroxine-binding site is contributed by K37. E64 is modified (4-carboxyglutamate). L-thyroxine-binding residues include E76 and S139.

Belongs to the transthyretin family. As to quaternary structure, homotetramer. Dimer of dimers. In the homotetramer, subunits assemble around a central channel that can accommodate two ligand molecules. Interacts with RBP4. In terms of processing, sulfonation of the reactive cysteine Cys-32 enhances the stability of the native conformation of TTR, avoiding misassembly of the protein leading to amyloid formation. Highly expressed in the choroid plexus.

The protein resides in the secreted. Its function is as follows. Thyroid hormone-binding protein. Probably transports thyroxine from the bloodstream to the brain. This chain is Transthyretin (TTR), found in Sminthopsis macroura (Stripe-faced dunnart).